We begin with the raw amino-acid sequence, 265 residues long: GTP cyclohydrolase FolE2 (265 aa).

The protein belongs to the GTP cyclohydrolase IV family.

It carries out the reaction GTP + H2O = 7,8-dihydroneopterin 3'-triphosphate + formate + H(+). It functions in the pathway cofactor biosynthesis; 7,8-dihydroneopterin triphosphate biosynthesis; 7,8-dihydroneopterin triphosphate from GTP: step 1/1. Functionally, converts GTP to 7,8-dihydroneopterin triphosphate. The chain is GTP cyclohydrolase FolE2 from Bordetella avium (strain 197N).